The chain runs to 201 residues: CMRF35-like molecule 7 (201 aa).

Residues 1–17 (MWLPPALLLLSLSGCFS) form the signal peptide. The Ig-like V-type domain maps to 18-120 (IQGPESVRAP…PDLGTQVKVI (103 aa)). The Extracellular segment spans residues 18–151 (IQGPESVRAP…FIGSHKRNHY (134 aa)). The cysteines at positions 36 and 104 are disulfide-linked. Residues 152-172 (MLLVFVKVPILLILVTAILWL) form a helical membrane-spanning segment. The Cytoplasmic portion of the chain corresponds to 173–201 (KGSQRVPEEPGEQPIYMNFSEPLTKDMAT). The residue at position 188 (tyrosine 188) is a Phosphotyrosine; by FYN.

Belongs to the CD300 family. In terms of assembly, interacts with TYROBP, which enhances cell surface expression and activation properties. Interacts with GRB2 in the presence of FYN. Post-translationally, phosphorylation on Tyr-188 by FYN is required for interaction with GRB2. In terms of tissue distribution, expressed exclusively in myeloid lineages.

The protein resides in the cell membrane. In terms of biological role, acts as an activating immune receptor through its interaction with ITAM-bearing adapter TYROBP, and also independently by recruitment of GRB2. The chain is CMRF35-like molecule 7 (CD300LB) from Homo sapiens (Human).